A 463-amino-acid polypeptide reads, in one-letter code: UDP-N-acetylmuramate--L-alanine ligase (463 aa).

112-118 (GTHGKTT) provides a ligand contact to ATP.

Belongs to the MurCDEF family.

The protein resides in the cytoplasm. The catalysed reaction is UDP-N-acetyl-alpha-D-muramate + L-alanine + ATP = UDP-N-acetyl-alpha-D-muramoyl-L-alanine + ADP + phosphate + H(+). The protein operates within cell wall biogenesis; peptidoglycan biosynthesis. Cell wall formation. In Dechloromonas aromatica (strain RCB), this protein is UDP-N-acetylmuramate--L-alanine ligase.